Reading from the N-terminus, the 95-residue chain is uncharacterized protein (95 aa).

This is an uncharacterized protein from Escherichia coli (strain K12).